Consider the following 970-residue polypeptide: m7GpppN-mRNA hydrolase (970 aa).

The Nudix hydrolase domain maps to 101–228 (KSIPVRGAAI…IKYYLINSMM (128 aa)). At serine 116 the chain carries Phosphoserine. A Nudix box motif is present at residues 134–155 (GKISKDENDIDCCIREVKEEIG). Mn(2+) contacts are provided by glutamate 149 and glutamate 153. Basic and acidic residues predominate over residues 302–314 (QHLKEQSGEHNQQ). Disordered stretches follow at residues 302–341 (QHLK…ANNK), 417–465 (AVSQ…PKLK), 501–520 (SSQK…NDSV), and 528–692 (YEDF…LSST). Over residues 315 to 334 (KDQQSSFSSQQQPSIFPSLS) the composition is skewed to low complexity. The residue at position 439 (serine 439) is a Phosphoserine. Acidic residues predominate over residues 528 to 539 (YEDFESSSDEEV). The segment covering 560–576 (SEKDSRRSQKEKPRNDA) has biased composition (basic and acidic residues). The span at 577–590 (SKTNLNASAESNSV) shows a compositional bias: polar residues. Residues 596–608 (KSSPSTQSKQNSS) show a composition bias toward low complexity. Positions 625–637 (DAYEVFESSSDEE) are enriched in acidic residues. Threonine 677 carries the phosphothreonine modification. Residues 677 to 691 (TESNKSINETVGLSS) are compositionally biased toward polar residues. Phosphoserine is present on residues serine 679, serine 682, serine 751, serine 771, serine 773, and serine 778. The interval 831 to 867 (LKKNDSTGYPRTEGGPSSEMSTSMKRNDATNNQELDK) is disordered. Polar residues predominate over residues 848-863 (SEMSTSMKRNDATNNQ).

The protein belongs to the Nudix hydrolase family. DCP2 subfamily. Component of the decapping complex composed of DCP1 and DCP2. Interacts with mRNA, LSM2, LSM4 and LSM8. Interacts with EDC3. The cofactor is Mn(2+).

Its subcellular location is the cytoplasm. The protein localises to the P-body. It catalyses the reaction a 5'-end (N(7)-methyl 5'-triphosphoguanosine)-ribonucleoside in mRNA + H2O = N(7)-methyl-GDP + a 5'-end phospho-ribonucleoside in mRNA + 2 H(+). Its function is as follows. Catalytic component of the decapping complex necessary for the degradation of mRNAs, both in normal mRNA turnover and in nonsense-mediated mRNA decay. Removes the 7-methyl guanine cap structure from mRNA molecules, yielding a 5'-phosphorylated mRNA fragment and 7m-GDP. Decapping is the major pathway of mRNA degradation in yeast and occurs through deadenylation, decapping and subsequent 5' to 3' exonucleolytic decay of the transcript body. Blocks autophagy in nutrient-rich conditions by repressing the expression of ATG-related genes through degradation of their transcripts. In Saccharomyces cerevisiae (strain ATCC 204508 / S288c) (Baker's yeast), this protein is m7GpppN-mRNA hydrolase.